Here is a 450-residue protein sequence, read N- to C-terminus: Paired box protein Pax-8 (450 aa).

The paired DNA-binding region spans 9 to 135 (GHGGLNQLGG…SSINRIIRTK (127 aa)). Residues 12-68 (GLNQLGGAFVNGRPLPEVVRQRIVDLAHQGVRPCDISRQLRVSHGCVSKILGRYYET) are PAI subdomain. The interval 87–135 (KVVEKIGDYKRQNPTMFAWEIRDRLLAEGVCDNDTVPSVSSINRIIRTK) is RED subdomain. Residues 159–182 (LIPSSAVTPPESPQSDSLGSTYSI) show a composition bias toward polar residues. Residues 159-222 (LIPSSAVTPP…QSSSSGPRKH (64 aa)) form a disordered region. Residue serine 303 is modified to Phosphoserine.

As to quaternary structure, interacts with WWTR1. Expressed in the excretory system, thyroid gland and Wilms tumors.

It localises to the nucleus. In terms of biological role, transcription factor for the thyroid-specific expression of the genes exclusively expressed in the thyroid cell type, maintaining the functional differentiation of such cells. The chain is Paired box protein Pax-8 (PAX8) from Homo sapiens (Human).